A 324-amino-acid chain; its full sequence is NADH-ubiquinone oxidoreductase chain 1 (324 aa).

8 consecutive transmembrane segments (helical) span residues 10 to 30 (MIMT…LTLV), 76 to 96 (FLFI…WIPL), 107 to 127 (LGLL…LWSG), 143 to 163 (VAQT…TIML), 178 to 198 (PIYL…STLA), 229 to 249 (LFFL…ITLF), 260 to 280 (ELFS…FLWV), and 300 to 320 (FLPL…SYAG).

This sequence belongs to the complex I subunit 1 family.

The protein resides in the mitochondrion inner membrane. The enzyme catalyses a ubiquinone + NADH + 5 H(+)(in) = a ubiquinol + NAD(+) + 4 H(+)(out). In terms of biological role, core subunit of the mitochondrial membrane respiratory chain NADH dehydrogenase (Complex I) that is believed to belong to the minimal assembly required for catalysis. Complex I functions in the transfer of electrons from NADH to the respiratory chain. The immediate electron acceptor for the enzyme is believed to be ubiquinone. The protein is NADH-ubiquinone oxidoreductase chain 1 (MT-ND1) of Excalfactoria chinensis (Blue-breasted quail).